A 184-amino-acid chain; its full sequence is GTP cyclohydrolase 1 (184 aa).

C75, H78, and C146 together coordinate Zn(2+).

It belongs to the GTP cyclohydrolase I family. As to quaternary structure, toroid-shaped homodecamer, composed of two pentamers of five dimers.

It catalyses the reaction GTP + H2O = 7,8-dihydroneopterin 3'-triphosphate + formate + H(+). Its pathway is cofactor biosynthesis; 7,8-dihydroneopterin triphosphate biosynthesis; 7,8-dihydroneopterin triphosphate from GTP: step 1/1. The protein is GTP cyclohydrolase 1 of Chromohalobacter salexigens (strain ATCC BAA-138 / DSM 3043 / CIP 106854 / NCIMB 13768 / 1H11).